We begin with the raw amino-acid sequence, 185 residues long: Ribosome-recycling factor (185 aa).

Belongs to the RRF family.

It is found in the cytoplasm. Responsible for the release of ribosomes from messenger RNA at the termination of protein biosynthesis. May increase the efficiency of translation by recycling ribosomes from one round of translation to another. This chain is Ribosome-recycling factor, found in Heliobacterium modesticaldum (strain ATCC 51547 / Ice1).